A 228-amino-acid chain; its full sequence is MASSTLSPVTQLCSSKSGLSSVSQCLLVKPMKINSHGLGKDKRMKVKCMATSIPADDRVPDMEKRNLMNLLLLGALSLPTAGMLVPYGTFFVPPGSGGGSGGTPAKDALGNDVIASEWLKTHPPGNRTLTQGLKGDPTYLVVENDGTLATYGINAVCTHLGCVVPFNAAENKFICPCHGSQYNNQGRVVRGPAPLSLALAHADIDDGKVVFVPWVETDFRTGEDPWWA.

A chloroplast-targeting transit peptide spans 1–49 (MASSTLSPVTQLCSSKSGLSSVSQCLLVKPMKINSHGLGKDKRMKVKCM). The chain crosses the membrane as a helical span at residues 72–92 (LLGALSLPTAGMLVPYGTFFV). In terms of domain architecture, Rieske spans 115-211 (ASEWLKTHPP…ADIDDGKVVF (97 aa)). The [2Fe-2S] cluster site is built by Cys-157, His-159, Cys-175, and His-178. The cysteines at positions 162 and 177 are disulfide-linked.

This sequence belongs to the Rieske iron-sulfur protein family. The 4 large subunits of the cytochrome b6-f complex are cytochrome b6, subunit IV (17 kDa polypeptide, petD), cytochrome f and the Rieske protein, while the 4 small subunits are petG, petL, petM and petN. The complex functions as a dimer. Requires [2Fe-2S] cluster as cofactor.

The protein resides in the plastid. It localises to the chloroplast thylakoid membrane. The enzyme catalyses 2 oxidized [plastocyanin] + a plastoquinol + 2 H(+)(in) = 2 reduced [plastocyanin] + a plastoquinone + 4 H(+)(out). In terms of biological role, component of the cytochrome b6-f complex, which mediates electron transfer between photosystem II (PSII) and photosystem I (PSI), cyclic electron flow around PSI, and state transitions. This Nicotiana tabacum (Common tobacco) protein is Cytochrome b6-f complex iron-sulfur subunit 1, chloroplastic (petC1).